Here is a 162-residue protein sequence, read N- to C-terminus: Peptide methionine sulfoxide reductase MsrA (162 aa).

Cys-10 is a catalytic residue.

This sequence belongs to the MsrA Met sulfoxide reductase family.

The enzyme catalyses L-methionyl-[protein] + [thioredoxin]-disulfide + H2O = L-methionyl-(S)-S-oxide-[protein] + [thioredoxin]-dithiol. It carries out the reaction [thioredoxin]-disulfide + L-methionine + H2O = L-methionine (S)-S-oxide + [thioredoxin]-dithiol. Functionally, has an important function as a repair enzyme for proteins that have been inactivated by oxidation. Catalyzes the reversible oxidation-reduction of methionine sulfoxide in proteins to methionine. The chain is Peptide methionine sulfoxide reductase MsrA from Clostridium acetobutylicum (strain ATCC 824 / DSM 792 / JCM 1419 / IAM 19013 / LMG 5710 / NBRC 13948 / NRRL B-527 / VKM B-1787 / 2291 / W).